The primary structure comprises 158 residues: Cyclic pyranopterin monophosphate synthase (158 aa).

Substrate contacts are provided by residues 76–78 and 114–115; these read LCH and ME. Aspartate 129 is a catalytic residue.

The protein belongs to the MoaC family. As to quaternary structure, homohexamer; trimer of dimers.

The enzyme catalyses (8S)-3',8-cyclo-7,8-dihydroguanosine 5'-triphosphate = cyclic pyranopterin phosphate + diphosphate. It functions in the pathway cofactor biosynthesis; molybdopterin biosynthesis. Its function is as follows. Catalyzes the conversion of (8S)-3',8-cyclo-7,8-dihydroguanosine 5'-triphosphate to cyclic pyranopterin monophosphate (cPMP). The chain is Cyclic pyranopterin monophosphate synthase from Brucella anthropi (strain ATCC 49188 / DSM 6882 / CCUG 24695 / JCM 21032 / LMG 3331 / NBRC 15819 / NCTC 12168 / Alc 37) (Ochrobactrum anthropi).